A 351-amino-acid chain; its full sequence is MNVAIVGATGYGGIQAVNLLKNNKNYKISFLGGNKTSGSKWNDNFPFIYLDTDPYIEKISVENISKNSDVALLCLPNGISSTLTRKLLDRGVKVIDLSADYRYKSLVEWEKVYSKEAVAFKRNDDDLCKEAVYGLPEINKEAISNGRLISCPGCYPTSALIPLVPYLSQGIIENEGIVIDSKSGTSGGGREPNQKLLLSECGEGLSAYGLINHRHTSEIEQVASLISGNKIELLFTPHLVPISRGMHSTIYGRLRDPGLTSDDCRILLDNYYRNFKNITVLPVGTFPSTKWVKNTNQIFLSVKVDIRNGRIVILSVIDNLLKGQTGQAIQNLNIMSGFSMDDGLELTNNFP.

Residue cysteine 154 is part of the active site.

Belongs to the NAGSA dehydrogenase family. Type 1 subfamily.

Its subcellular location is the cytoplasm. The enzyme catalyses N-acetyl-L-glutamate 5-semialdehyde + phosphate + NADP(+) = N-acetyl-L-glutamyl 5-phosphate + NADPH + H(+). It participates in amino-acid biosynthesis; L-arginine biosynthesis; N(2)-acetyl-L-ornithine from L-glutamate: step 3/4. In terms of biological role, catalyzes the NADPH-dependent reduction of N-acetyl-5-glutamyl phosphate to yield N-acetyl-L-glutamate 5-semialdehyde. This chain is N-acetyl-gamma-glutamyl-phosphate reductase, found in Prochlorococcus marinus (strain MIT 9312).